The chain runs to 90 residues: Small ribosomal subunit protein uS15 (90 aa).

Belongs to the universal ribosomal protein uS15 family. Part of the 30S ribosomal subunit. Forms a bridge to the 50S subunit in the 70S ribosome, contacting the 23S rRNA.

One of the primary rRNA binding proteins, it binds directly to 16S rRNA where it helps nucleate assembly of the platform of the 30S subunit by binding and bridging several RNA helices of the 16S rRNA. In terms of biological role, forms an intersubunit bridge (bridge B4) with the 23S rRNA of the 50S subunit in the ribosome. The protein is Small ribosomal subunit protein uS15 of Thermotoga maritima (strain ATCC 43589 / DSM 3109 / JCM 10099 / NBRC 100826 / MSB8).